We begin with the raw amino-acid sequence, 317 residues long: tRNA pseudouridine synthase B (317 aa).

Asp47 serves as the catalytic Nucleophile.

It belongs to the pseudouridine synthase TruB family. Type 1 subfamily.

The enzyme catalyses uridine(55) in tRNA = pseudouridine(55) in tRNA. Responsible for synthesis of pseudouridine from uracil-55 in the psi GC loop of transfer RNAs. This Shewanella sp. (strain MR-4) protein is tRNA pseudouridine synthase B.